The following is a 169-amino-acid chain: Menaquinol:cytochrome c reductase iron-sulfur subunit (169 aa).

Positions 62–160 constitute a Rieske domain; that stretch reads EPKRFDFKVK…FEVKDGKLYL (99 aa). [2Fe-2S] cluster-binding residues include cysteine 102, histidine 104, cysteine 123, and histidine 126. Cysteines 107 and 125 form a disulfide.

This sequence belongs to the Rieske iron-sulfur protein family. As to quaternary structure, the main subunits of the menaquinol:cytochrome c complex are a Rieske-type iron-sulfur protein (QcrA), a cytochrome b (QcrB) and a cytochrome c (QcrC). [2Fe-2S] cluster serves as cofactor.

In terms of biological role, component of the menaquinol:cytochrome c reductase complex. The Rieske protein is a high potential 2Fe-2S protein. The sequence is that of Menaquinol:cytochrome c reductase iron-sulfur subunit (qcrA) from Geobacillus thermodenitrificans.